The primary structure comprises 324 residues: Dolichyl-phosphate beta-glucosyltransferase (324 aa).

Residues methionine 1–glutamine 7 lie on the Lumenal side of the membrane. The helical transmembrane segment at leucine 8–phenylalanine 28 threads the bilayer. The Cytoplasmic segment spans residues isoleucine 29–serine 324.

It belongs to the glycosyltransferase 2 family.

The protein localises to the endoplasmic reticulum membrane. The enzyme catalyses a di-trans,poly-cis-dolichyl phosphate + UDP-alpha-D-glucose = a di-trans,poly-cis-dolichyl beta-D-glucosyl phosphate + UDP. Its pathway is protein modification; protein glycosylation. Dolichyl-phosphate beta-glucosyltransferase that operates in the biosynthetic pathway of dolichol-linked oligosaccharides, the glycan precursors employed in protein asparagine (N)-glycosylation. The assembly of dolichol-linked oligosaccharides begins on the cytosolic side of the endoplasmic reticulum membrane and finishes in its lumen. The sequential addition of sugars to dolichol pyrophosphate produces dolichol-linked oligosaccharides containing fourteen sugars, including two GlcNAcs, nine mannoses and three glucoses. Once assembled, the oligosaccharide is transferred from the lipid to nascent proteins by oligosaccharyltransferases. Dolichyl-phosphate beta-glucosyltransferase produces dolichyl beta-D-glucosyl phosphate/Dol-P-Glc, the glucose donor substrate used sequentially by ALG6, ALG8 and ALG10 to add glucose residues on top of the Man(9)GlcNAc(2)-PP-Dol structure. These are the three last steps in the biosynthetic pathway of dolichol-linked oligosaccharides to produce Glc(3)Man(9)GlcNAc(2)-PP-Dol. The enzyme is most probably active on the cytoplasmic side of the endoplasmic reticulum while its product Dol-P-Glc is the substrate for ALG6, ALG8 and ALG11 in the lumen of the endoplasmic reticulum. This is Dolichyl-phosphate beta-glucosyltransferase from Mus musculus (Mouse).